A 156-amino-acid chain; its full sequence is Ribosomal RNA large subunit methyltransferase H (156 aa).

Residues Leu-73, Gly-104, and Ile-123–Leu-128 contribute to the S-adenosyl-L-methionine site.

Belongs to the RNA methyltransferase RlmH family. In terms of assembly, homodimer.

It localises to the cytoplasm. The catalysed reaction is pseudouridine(1915) in 23S rRNA + S-adenosyl-L-methionine = N(3)-methylpseudouridine(1915) in 23S rRNA + S-adenosyl-L-homocysteine + H(+). Its function is as follows. Specifically methylates the pseudouridine at position 1915 (m3Psi1915) in 23S rRNA. The chain is Ribosomal RNA large subunit methyltransferase H from Burkholderia ambifaria (strain ATCC BAA-244 / DSM 16087 / CCUG 44356 / LMG 19182 / AMMD) (Burkholderia cepacia (strain AMMD)).